The following is a 400-amino-acid chain: Probable S-adenosylmethionine synthase (400 aa).

Residue lysine 135–aspartate 140 participates in ATP binding.

The protein belongs to the AdoMet synthase 2 family. It depends on Mg(2+) as a cofactor.

It carries out the reaction L-methionine + ATP + H2O = S-adenosyl-L-methionine + phosphate + diphosphate. It functions in the pathway amino-acid biosynthesis; S-adenosyl-L-methionine biosynthesis; S-adenosyl-L-methionine from L-methionine: step 1/1. Catalyzes the formation of S-adenosylmethionine from methionine and ATP. This chain is Probable S-adenosylmethionine synthase (mat), found in Aquifex aeolicus (strain VF5).